Here is a 220-residue protein sequence, read N- to C-terminus: Ribonuclease HII (220 aa).

Residues 32 to 220 (KHIVGIDEAG…FAPIKGRYSV (189 aa)) form the RNase H type-2 domain. Residues Asp38, Glu39, and Asp130 each contribute to the a divalent metal cation site.

It belongs to the RNase HII family. The cofactor is Mn(2+). Mg(2+) is required as a cofactor.

It is found in the cytoplasm. It carries out the reaction Endonucleolytic cleavage to 5'-phosphomonoester.. In terms of biological role, endonuclease that specifically degrades the RNA of RNA-DNA hybrids. This Brucella anthropi (strain ATCC 49188 / DSM 6882 / CCUG 24695 / JCM 21032 / LMG 3331 / NBRC 15819 / NCTC 12168 / Alc 37) (Ochrobactrum anthropi) protein is Ribonuclease HII.